Here is a 3914-residue protein sequence, read N- to C-terminus: Trichosetin synthetase PKS-NRPS1 (3914 aa).

One can recognise a Ketosynthase family 3 (KS3) domain in the interval 4-420 (NEPIAIIGSA…GTNAHAIIEA (417 aa)). Residues Cys-177, His-301, and His-340 each act as for beta-ketoacyl synthase activity in the active site. The malonyl-CoA:ACP transacylase (MAT) domain stretch occupies residues 525–847 (VLTGQGAQWP…REKDDIQQFA (323 aa)). An N-terminal hotdog fold region spans residues 913–1047 (HPILGRRCHD…AHVKASLSVP (135 aa)). Residues 913 to 1214 (HPILGRRCHD…MELVPFSPAT (302 aa)) are dehydratase (DH) domain. The PKS/mFAS DH domain occupies 913–1216 (HPILGRRCHD…LVPFSPATPE (304 aa)). His-946 functions as the Proton acceptor; for dehydratase activity in the catalytic mechanism. Residues 1062–1216 (LRKVEVDRFY…LVPFSPATPE (155 aa)) are C-terminal hotdog fold. Residue Asp-1122 is the Proton donor; for dehydratase activity of the active site. The methyltransferase (MT) domain stretch occupies residues 1364–1593 (EGFGLDLVNK…DLPETKSTEL (230 aa)). The tract at residues 2083–2255 (TFLLIGLSGE…VAASSIDISS (173 aa)) is ketoreductase (KR) domain. A Carrier 1 domain is found at 2356-2436 (LADVKTKADA…DLIEESLNLI (81 aa)). An O-(pantetheine 4'-phosphoryl)serine modification is found at Ser-2396. The interval 2447–2518 (EAGSTPTTQP…DSTDNSTPLK (72 aa)) is disordered. Polar residues predominate over residues 2481 to 2500 (QQTGSDSSRSPIDTPLTSME). The segment at 2529–2956 (SYGQAGFWFL…VQGTNKAADT (428 aa)) is condensation (C) domain. The segment at 2991 to 3388 (QTIQANSTKV…LLFCDGRLED (398 aa)) is adenylation (A) (KR) domain. One can recognise a Carrier 2 domain in the interval 3502 to 3579 (GTLTVAEQRL…TMAVVLESCG (78 aa)). Ser-3539 is subject to O-(pantetheine 4'-phosphoryl)serine. A reductase (RED) domain region spans residues 3615 to 3831 (LTGSAGYLGR…VLPTGDIVKA (217 aa)).

This sequence in the C-terminal section; belongs to the NRP synthetase family.

The enzyme catalyses L-serine + 7 malonyl-CoA + acetyl-CoA + 2 S-adenosyl-L-methionine + ATP + 8 NADPH + 11 H(+) = (5S)-3-[(2E,6R,8E,10E,12E)-2,6-dimethyltetradeca-2,8,10,12-tetraenoyl]-5-(hydroxymethyl)pyrrolidine-2,4-dione + AMP + 2 S-adenosyl-L-homocysteine + 7 CO2 + diphosphate + 8 NADP(+) + 8 CoA + 6 H2O. The protein operates within mycotoxin biosynthesis. Functionally, hybrid PKS-NRPS synthetase; part of the gene cluster that mediates the biosynthesis of trichosetin, a trans-fused decalin-containing tetramic acid with antimicrobial activity. The PKS module of PKS-NRPS1 together with the enoylreductase (ER) catalyze the formation of the polyketide unit which is then conjugated to L-serine by the condensation domain of the PKS-NRPS1 NRPS module. Activity of the Dieckmann cyclase domain (RED) results in release of the Dieckmann product intermediate. Diels-Alderase (DA) is involved in endo-selective Diels-Alder cycloaddition to form the decalin ring, leading to the production of N-desmethylequisetin also called trichosetin. The cluster does not contain the equisetin N-methyltransferase and consequently, trichosetin is isolated as final product. The polypeptide is Trichosetin synthetase PKS-NRPS1 (Gibberella fujikuroi (strain CBS 195.34 / IMI 58289 / NRRL A-6831) (Bakanae and foot rot disease fungus)).